Reading from the N-terminus, the 311-residue chain is Cytosolic Fe-S cluster assembly factor Nubp1 homolog (311 aa).

The segment at 1–20 is disordered; sequence MQAPPPEHCPGVESENAGKG. [4Fe-4S] cluster-binding residues include Cys9, Cys23, Cys26, and Cys32. Residue 63–70 coordinates ATP; it reads GKGGVGKS. Positions 240 and 243 each coordinate [4Fe-4S] cluster.

This sequence belongs to the Mrp/NBP35 ATP-binding proteins family. NUBP1/NBP35 subfamily. In terms of assembly, heterotetramer of 2 Nubp1 and 2 Nubp2 chains. [4Fe-4S] cluster is required as a cofactor.

It is found in the cytoplasm. Component of the cytosolic iron-sulfur (Fe/S) protein assembly (CIA) machinery. Required for maturation of extramitochondrial Fe-S proteins. The Nubp1-Nubp2 heterotetramer forms a Fe-S scaffold complex, mediating the de novo assembly of an Fe-S cluster and its transfer to target apoproteins. This chain is Cytosolic Fe-S cluster assembly factor Nubp1 homolog, found in Drosophila simulans (Fruit fly).